Reading from the N-terminus, the 189-residue chain is GTPase NRas (189 aa).

Residues 10–18 (GAGGVGKSA) and 29–30 (VD) each bind GTP. The short motif at 32–40 (YDPTIEDSY) is the Effector region element. A GTP-binding site is contributed by 57-61 (DTAGQ). Serine 89 carries the phosphoserine modification. GTP is bound at residue 116–119 (NKCD). The tract at residues 166 to 185 (YRMKKLNSNDDGTQGCMGLP) is hypervariable region. Lysine 170 is covalently cross-linked (Glycyl lysine isopeptide (Lys-Gly) (interchain with G-Cter in ubiquitin)). Cysteine 181 is lipidated: S-palmitoyl cysteine. A lipid anchor (S-farnesyl cysteine) is attached at cysteine 186. The propeptide at 187–189 (VVM) is removed in mature form.

The protein belongs to the small GTPase superfamily. Ras family. As to quaternary structure, interacts (active GTP-bound form preferentially) with RGS14. Interacts (active GTP-bound form) with RASSF7. Interacts (active GTP-bound form) with both SHOC2 and PP1c (all isoforms) to form a tertiary complex; SHOC2 and PP1c preferably bind M-Ras/MRAS, but they also bind K-Ras/KRAS, N-Ras/NRAS and H-Ras/HRAS. In terms of processing, palmitoylated by the ZDHHC9-GOLGA7 complex. Depalmitoylated by ABHD17A, ABHD17B and ABHD17C. A continuous cycle of de- and re-palmitoylation regulates rapid exchange between plasma membrane and Golgi. Acetylation at Lys-104 prevents interaction with guanine nucleotide exchange factors (GEFs). Post-translationally, ubiquitinated by the BCR(LZTR1) E3 ubiquitin ligase complex at Lys-170 in a non-degradative manner, leading to inhibit Ras signaling by decreasing Ras association with membranes. In terms of processing, phosphorylation at Ser-89 enhances NRAS association with its downstream effectors.

The protein resides in the cell membrane. The protein localises to the golgi apparatus membrane. It catalyses the reaction GTP + H2O = GDP + phosphate + H(+). With respect to regulation, alternates between an inactive form bound to GDP and an active form bound to GTP. Activated by a guanine nucleotide-exchange factor (GEF) and inactivated by a GTPase-activating protein (GAP). Its function is as follows. Ras proteins bind GDP/GTP and possess intrinsic GTPase activity. The polypeptide is GTPase NRas (NRAS) (Cavia porcellus (Guinea pig)).